The sequence spans 155 residues: Small ribosomal subunit protein bS6 (155 aa).

A disordered region spans residues 94 to 155; sequence EKHEEGPSAM…RPRRPREDRV (62 aa).

This sequence belongs to the bacterial ribosomal protein bS6 family.

In terms of biological role, binds together with bS18 to 16S ribosomal RNA. In Rhizobium leguminosarum bv. trifolii (strain WSM2304), this protein is Small ribosomal subunit protein bS6.